The primary structure comprises 479 residues: Anaerobic nitric oxide reductase flavorubredoxin (479 aa).

The interval 30-210 (LRGSSYNSYL…PFSRLVTPKI (181 aa)) is zinc metallo-hydrolase. Positions 79, 81, 83, 147, 166, and 227 each coordinate Fe cation. The Flavodoxin-like domain occupies 254–393 (ITIFYDTMSN…LCRQHGRDIA (140 aa)). FMN contacts are provided by residues 260 to 264 (TMSNN) and 342 to 369 (AFGS…EMSL). Residues 423-474 (GPKMQCSVCQWIYDPAQGEPLQDVAPGTPWSDVPDNFLCPECSLGKDVFDVL) enclose the Rubredoxin-like domain. Fe cation contacts are provided by Cys428, Cys431, Cys461, and Cys464.

It in the N-terminal section; belongs to the zinc metallo-hydrolase group 3 family. Homotetramer. Requires Fe cation as cofactor. FMN is required as a cofactor.

Its subcellular location is the cytoplasm. It functions in the pathway nitrogen metabolism; nitric oxide reduction. Functionally, anaerobic nitric oxide reductase; uses NADH to detoxify nitric oxide (NO), protecting several 4Fe-4S NO-sensitive enzymes. Has at least 2 reductase partners, only one of which (NorW, flavorubredoxin reductase) has been identified. NO probably binds to the di-iron center; electrons enter from the NorW at rubredoxin and are transferred sequentially to the FMN center and the di-iron center. Also able to function as an aerobic oxygen reductase. The polypeptide is Anaerobic nitric oxide reductase flavorubredoxin (Salmonella choleraesuis (strain SC-B67)).